The following is a 440-amino-acid chain: Argininosuccinate lyase (440 aa).

This sequence belongs to the lyase 1 family. Argininosuccinate lyase subfamily.

It localises to the cytoplasm. The enzyme catalyses 2-(N(omega)-L-arginino)succinate = fumarate + L-arginine. It participates in amino-acid biosynthesis; L-arginine biosynthesis; L-arginine from L-ornithine and carbamoyl phosphate: step 3/3. The chain is Argininosuccinate lyase from Clostridium botulinum (strain Okra / Type B1).